The following is a 465-amino-acid chain: Glycine--tRNA ligase (465 aa).

Substrate is bound by residues Arg-98 and Glu-174. Residues 206–208 (RNE), 216–221 (FRTREF), 290–291 (EL), and 334–337 (GADR) contribute to the ATP site. 221–225 (FEQME) is a substrate binding site. 330–334 (EPSLG) is a substrate binding site.

Belongs to the class-II aminoacyl-tRNA synthetase family. In terms of assembly, homodimer.

The protein resides in the cytoplasm. It catalyses the reaction tRNA(Gly) + glycine + ATP = glycyl-tRNA(Gly) + AMP + diphosphate. Functionally, catalyzes the attachment of glycine to tRNA(Gly). The chain is Glycine--tRNA ligase from Agathobacter rectalis (strain ATCC 33656 / DSM 3377 / JCM 17463 / KCTC 5835 / VPI 0990) (Eubacterium rectale).